Here is a 130-residue protein sequence, read N- to C-terminus: Large ribosomal subunit protein bL20 (130 aa).

The protein belongs to the bacterial ribosomal protein bL20 family.

Binds directly to 23S ribosomal RNA and is necessary for the in vitro assembly process of the 50S ribosomal subunit. It is not involved in the protein synthesizing functions of that subunit. The sequence is that of Large ribosomal subunit protein bL20 from Clavibacter sepedonicus (Clavibacter michiganensis subsp. sepedonicus).